Reading from the N-terminus, the 27-residue chain is Pregnancy-associated glycoprotein 62 (27 aa).

This sequence belongs to the peptidase A1 family. In terms of processing, glycosylated. As to expression, placenta.

The chain is Pregnancy-associated glycoprotein 62 (PAG62) from Capra hircus (Goat).